A 414-amino-acid chain; its full sequence is Cyclohex-1-ene-1-carbonyl-CoA dehydrogenase (414 aa).

The active-site Proton acceptor is the aspartate 124. The FAD site is built by alanine 157, threonine 158, serine 164, and threonine 190. Serine 164 is a cyclohex-1-ene-1-carbonyl-CoA binding site. Residue serine 164 coordinates cyclohexa-1,5-diene-1-carbonyl-CoA. Cyclohex-1-ene-1-carbonyl-CoA is bound by residues lysine 211, arginine 275, and threonine 396. 3 residues coordinate cyclohexa-1,5-diene-1-carbonyl-CoA: lysine 211, arginine 275, and threonine 396. 2 residues coordinate FAD: threonine 398 and glutamine 400. Arginine 408 is a binding site for cyclohex-1-ene-1-carbonyl-CoA. Residue arginine 408 participates in cyclohexa-1,5-diene-1-carbonyl-CoA binding.

The protein belongs to the acyl-CoA dehydrogenase family. In terms of assembly, homotetramer. The cofactor is FAD.

It carries out the reaction cyclohex-1-ene-1-carbonyl-CoA + oxidized [electron-transfer flavoprotein] + H(+) = cyclohexa-1,5-diene-1-carbonyl-CoA + reduced [electron-transfer flavoprotein]. In terms of biological role, mediates the conversion of cyclohex-1-ene-1-carbonyl-CoA (Ch1CoA) into (E)-2-cyclohex-1,5-diene-1-carbonyl-CoA in biosynthesis of cyclohexane-1-carboxylate, a by-product produced during fermentation of benzoate and crotonate to acetate. Also able to further convert (E)-2-cyclohex-1,5-diene-1-carbonyl-CoA to benzoyl-CoA. In Syntrophus aciditrophicus (strain SB), this protein is Cyclohex-1-ene-1-carbonyl-CoA dehydrogenase.